Consider the following 890-residue polypeptide: Alanine--tRNA ligase (890 aa).

Residues histidine 568, histidine 572, cysteine 680, and histidine 684 each contribute to the Zn(2+) site.

The protein belongs to the class-II aminoacyl-tRNA synthetase family. The cofactor is Zn(2+).

Its subcellular location is the cytoplasm. It carries out the reaction tRNA(Ala) + L-alanine + ATP = L-alanyl-tRNA(Ala) + AMP + diphosphate. Its function is as follows. Catalyzes the attachment of alanine to tRNA(Ala) in a two-step reaction: alanine is first activated by ATP to form Ala-AMP and then transferred to the acceptor end of tRNA(Ala). Also edits incorrectly charged Ser-tRNA(Ala) and Gly-tRNA(Ala) via its editing domain. In Psychrobacter arcticus (strain DSM 17307 / VKM B-2377 / 273-4), this protein is Alanine--tRNA ligase.